Here is a 302-residue protein sequence, read N- to C-terminus: 4-diphosphocytidyl-2-C-methyl-D-erythritol kinase (302 aa).

Residue K13 is part of the active site. 101 to 111 (PVASGIGGGSS) provides a ligand contact to ATP. D143 is an active-site residue.

It belongs to the GHMP kinase family. IspE subfamily.

It catalyses the reaction 4-CDP-2-C-methyl-D-erythritol + ATP = 4-CDP-2-C-methyl-D-erythritol 2-phosphate + ADP + H(+). The protein operates within isoprenoid biosynthesis; isopentenyl diphosphate biosynthesis via DXP pathway; isopentenyl diphosphate from 1-deoxy-D-xylulose 5-phosphate: step 3/6. Its function is as follows. Catalyzes the phosphorylation of the position 2 hydroxy group of 4-diphosphocytidyl-2C-methyl-D-erythritol. The polypeptide is 4-diphosphocytidyl-2-C-methyl-D-erythritol kinase (Granulibacter bethesdensis (strain ATCC BAA-1260 / CGDNIH1)).